A 227-amino-acid polypeptide reads, in one-letter code: DNA utilization protein YhgH (227 aa).

It belongs to the ComF/GntX family.

Its function is as follows. Required for the use of extracellular DNA as a nutrient. Has been suggested to be involved in gluconate metabolism. The sequence is that of DNA utilization protein YhgH from Escherichia coli (strain K12).